Reading from the N-terminus, the 451-residue chain is Glycine--tRNA ligase (451 aa).

Residues arginine 94 and glutamate 164 each contribute to the substrate site. ATP is bound by residues 196–198, 206–211, 281–282, and 325–328; these read RNE, FRTREF, EL, and GVER. 211–215 contacts substrate; sequence FEQME. 321-325 lines the substrate pocket; sequence EPSVG.

The protein belongs to the class-II aminoacyl-tRNA synthetase family. As to quaternary structure, homodimer.

The protein resides in the cytoplasm. The catalysed reaction is tRNA(Gly) + glycine + ATP = glycyl-tRNA(Gly) + AMP + diphosphate. Functionally, catalyzes the attachment of glycine to tRNA(Gly). The polypeptide is Glycine--tRNA ligase (Mesoplasma florum (strain ATCC 33453 / NBRC 100688 / NCTC 11704 / L1) (Acholeplasma florum)).